The chain runs to 116 residues: Cyclin-dependent protein kinase inhibitor SMR9 (116 aa).

Residues 1–22 show a composition bias toward basic residues; sequence MASKGKKPLRRTTTRRRKRSHF. The tract at residues 1-62 is disordered; it reads MASKGKKPLR…PVSAESGCCT (62 aa). Low complexity predominate over residues 35-56; that stretch reads VTSTSSTSTSPTSTATPSPVSA.

Its function is as follows. Probable cyclin-dependent protein kinase (CDK) inhibitor that functions as a repressor of mitosis in the endoreduplication cell cycle. The polypeptide is Cyclin-dependent protein kinase inhibitor SMR9 (Arabidopsis thaliana (Mouse-ear cress)).